The chain runs to 215 residues: MVKLYSKFPDVQVLTTKGPIDFYKDIFGKGKWLFLFAHPADFTPVCTTEFVAFSQKYEEFKKLGVELVGLSVDSIYSHIQWLMDIEQRYGVKVPFPVIADPDKKLARMLDALDEASGQTIRIVVLASPDGIIRFVAQYPMEFGRNIDELLRITKAAIVNYKAKVVLPANWQPGQDVIVPPPAIFDEAEMRIKLPNAKAWYLLFKKYEELPPDQKV.

The Thioredoxin domain maps to 2 to 158 (VKLYSKFPDV…LLRITKAAIV (157 aa)). Cys-46 functions as the Cysteine sulfenic acid (-SOH) intermediate in the catalytic mechanism. Arg-121 provides a ligand contact to substrate.

It belongs to the peroxiredoxin family. Prx6 subfamily. Homodecamer. Pentamer of dimers that assemble into a ring structure.

The protein resides in the cytoplasm. The catalysed reaction is a hydroperoxide + [thioredoxin]-dithiol = an alcohol + [thioredoxin]-disulfide + H2O. In terms of biological role, thiol-specific peroxidase that catalyzes the reduction of hydrogen peroxide and organic hydroperoxides to water and alcohols, respectively. Plays a role in cell protection against oxidative stress by detoxifying peroxides. The polypeptide is Peroxiredoxin 1 (Sulfurisphaera tokodaii (strain DSM 16993 / JCM 10545 / NBRC 100140 / 7) (Sulfolobus tokodaii)).